Here is a 67-residue protein sequence, read N- to C-terminus: Probable Sec-independent protein translocase protein TatE (67 aa).

A helical transmembrane segment spans residues 4–21 (ISITKLLVVAALVVLLFG).

It belongs to the TatA/E family. TatE subfamily.

Its subcellular location is the cell inner membrane. Its function is as follows. Part of the twin-arginine translocation (Tat) system that transports large folded proteins containing a characteristic twin-arginine motif in their signal peptide across membranes. TatE shares overlapping functions with TatA. This is Probable Sec-independent protein translocase protein TatE from Salmonella dublin (strain CT_02021853).